The chain runs to 215 residues: Large ribosomal subunit protein mL43 (215 aa).

It belongs to the mitochondrion-specific ribosomal protein mL43 family. In terms of assembly, component of the mitochondrial large ribosomal subunit (mt-LSU). Mature mammalian 55S mitochondrial ribosomes consist of a small (28S) and a large (39S) subunit. The 28S small subunit contains a 12S ribosomal RNA (12S mt-rRNA) and 30 different proteins. The 39S large subunit contains a 16S rRNA (16S mt-rRNA), a copy of mitochondrial valine transfer RNA (mt-tRNA(Val)), which plays an integral structural role, and 52 different proteins. As to expression, high relative levels in skeletal muscle and testis. Lower levels of expression in the heart, brain, placenta, lung, liver, kidney, pancreas, spleen, thymus, prostate, ovary, small intestine, colon and leukocytes. Expression is coregulated with TWNK.

The protein resides in the mitochondrion. This Homo sapiens (Human) protein is Large ribosomal subunit protein mL43 (MRPL43).